The sequence spans 396 residues: Argininosuccinate synthase (396 aa).

9 to 17 (AYSGGLDTS) contributes to the ATP binding site. Residue Tyr85 coordinates L-citrulline. Position 115 (Gly115) interacts with ATP. L-aspartate is bound by residues Thr117, Asn121, and Asp122. Asn121 is a binding site for L-citrulline. Positions 125, 173, 258, and 270 each coordinate L-citrulline.

The protein belongs to the argininosuccinate synthase family. Type 1 subfamily. As to quaternary structure, homotetramer.

It is found in the cytoplasm. The enzyme catalyses L-citrulline + L-aspartate + ATP = 2-(N(omega)-L-arginino)succinate + AMP + diphosphate + H(+). It participates in amino-acid biosynthesis; L-arginine biosynthesis; L-arginine from L-ornithine and carbamoyl phosphate: step 2/3. This Streptococcus agalactiae serotype III (strain NEM316) protein is Argininosuccinate synthase.